The primary structure comprises 926 residues: DNA mismatch repair protein MutS (926 aa).

Residues 16–40 are disordered; sequence VASTPTRRGRPPGSSAARASNGAGS. The span at 26 to 40 shows a compositional bias: low complexity; it reads PPGSSAARASNGAGS. 658 to 665 contacts ATP; that stretch reads GPNMAGKS.

This sequence belongs to the DNA mismatch repair MutS family.

Functionally, this protein is involved in the repair of mismatches in DNA. It is possible that it carries out the mismatch recognition step. This protein has a weak ATPase activity. This is DNA mismatch repair protein MutS from Granulibacter bethesdensis (strain ATCC BAA-1260 / CGDNIH1).